The sequence spans 123 residues: Small ribosomal subunit protein uS12 (123 aa).

Positions 1–29 are disordered; that stretch reads MPTINQLVRKGRVPQKAKSKVPAMEQNPQ. Over residues 9-19 the composition is skewed to basic residues; the sequence is RKGRVPQKAKS. 3-methylthioaspartic acid is present on aspartate 89.

Belongs to the universal ribosomal protein uS12 family. In terms of assembly, part of the 30S ribosomal subunit. Contacts proteins S8 and S17. May interact with IF1 in the 30S initiation complex.

With S4 and S5 plays an important role in translational accuracy. Functionally, interacts with and stabilizes bases of the 16S rRNA that are involved in tRNA selection in the A site and with the mRNA backbone. Located at the interface of the 30S and 50S subunits, it traverses the body of the 30S subunit contacting proteins on the other side and probably holding the rRNA structure together. The combined cluster of proteins S8, S12 and S17 appears to hold together the shoulder and platform of the 30S subunit. The chain is Small ribosomal subunit protein uS12 from Erythrobacter litoralis (strain HTCC2594).